Consider the following 174-residue polypeptide: Methionine-R-sulfoxide reductase B2, mitochondrial (174 aa).

The transit peptide at 1–61 (MARLLRALRG…PEQFYVTREK (61 aa)) directs the protein to the mitochondrion. The MsrB domain occupies 62-172 (GTEAPFSGMY…NSVALKFKPS (111 aa)). Positions 82, 85, 138, and 141 each coordinate Zn(2+). The active-site Nucleophile is the cysteine 161.

This sequence belongs to the MsrB Met sulfoxide reductase family. It depends on Zn(2+) as a cofactor.

The protein localises to the mitochondrion. The catalysed reaction is L-methionyl-[protein] + [thioredoxin]-disulfide + H2O = L-methionyl-(R)-S-oxide-[protein] + [thioredoxin]-dithiol. It carries out the reaction [thioredoxin]-disulfide + L-methionine + H2O = L-methionine (R)-S-oxide + [thioredoxin]-dithiol. Methionine-sulfoxide reductase that specifically reduces methionine (R)-sulfoxide back to methionine. While in many cases, methionine oxidation is the result of random oxidation following oxidative stress, methionine oxidation is also a post-translational modification that takes place on specific residue. Upon oxidative stress, may play a role in the preservation of mitochondrial integrity by decreasing the intracellular reactive oxygen species build-up through its scavenging role, hence contributing to cell survival and protein maintenance. In Rattus norvegicus (Rat), this protein is Methionine-R-sulfoxide reductase B2, mitochondrial (Msrb2).